Consider the following 87-residue polypeptide: Small ribosomal subunit protein uS17 (87 aa).

It belongs to the universal ribosomal protein uS17 family. As to quaternary structure, part of the 30S ribosomal subunit.

One of the primary rRNA binding proteins, it binds specifically to the 5'-end of 16S ribosomal RNA. This chain is Small ribosomal subunit protein uS17, found in Syntrophobacter fumaroxidans (strain DSM 10017 / MPOB).